A 1179-amino-acid chain; its full sequence is DNA-directed RNA polymerase subunit beta (1179 aa).

A compositionally biased stretch (acidic residues) spans 1153-1162 (MREMEDEDEG). The interval 1153-1179 (MREMEDEDEGNGEKLNLVLEGGSLNEE) is disordered.

Belongs to the RNA polymerase beta chain family. In terms of assembly, the RNAP catalytic core consists of 2 alpha, 1 beta, 1 beta' and 1 omega subunit. When a sigma factor is associated with the core the holoenzyme is formed, which can initiate transcription.

It carries out the reaction RNA(n) + a ribonucleoside 5'-triphosphate = RNA(n+1) + diphosphate. DNA-dependent RNA polymerase catalyzes the transcription of DNA into RNA using the four ribonucleoside triphosphates as substrates. In Brevibacillus brevis (strain 47 / JCM 6285 / NBRC 100599), this protein is DNA-directed RNA polymerase subunit beta.